We begin with the raw amino-acid sequence, 152 residues long: Ribosomal RNA large subunit methyltransferase H (152 aa).

S-adenosyl-L-methionine-binding positions include leucine 65, glycine 96, and 115-120; that span reads LGPMTW.

The protein belongs to the RNA methyltransferase RlmH family. In terms of assembly, homodimer.

Its subcellular location is the cytoplasm. It carries out the reaction pseudouridine(1915) in 23S rRNA + S-adenosyl-L-methionine = N(3)-methylpseudouridine(1915) in 23S rRNA + S-adenosyl-L-homocysteine + H(+). Functionally, specifically methylates the pseudouridine at position 1915 (m3Psi1915) in 23S rRNA. This is Ribosomal RNA large subunit methyltransferase H from Gluconacetobacter diazotrophicus (strain ATCC 49037 / DSM 5601 / CCUG 37298 / CIP 103539 / LMG 7603 / PAl5).